Reading from the N-terminus, the 467-residue chain is tRNA-2-methylthio-N(6)-dimethylallyladenosine synthase (467 aa).

Residues 15 to 135 (KKIFVKTYGC…LPEYVARLAN (121 aa)) enclose the MTTase N-terminal domain. The [4Fe-4S] cluster site is built by Cys-24, Cys-60, Cys-98, Cys-177, Cys-181, and Cys-184. The Radical SAM core domain occupies 163–395 (LARGATAFLT…QALLGEQQLA (233 aa)). Positions 398–461 (AGCAGRTMPV…RNSLRGRLRE (64 aa)) constitute a TRAM domain.

Belongs to the methylthiotransferase family. MiaB subfamily. In terms of assembly, monomer. It depends on [4Fe-4S] cluster as a cofactor.

The protein localises to the cytoplasm. It carries out the reaction N(6)-dimethylallyladenosine(37) in tRNA + (sulfur carrier)-SH + AH2 + 2 S-adenosyl-L-methionine = 2-methylsulfanyl-N(6)-dimethylallyladenosine(37) in tRNA + (sulfur carrier)-H + 5'-deoxyadenosine + L-methionine + A + S-adenosyl-L-homocysteine + 2 H(+). Catalyzes the methylthiolation of N6-(dimethylallyl)adenosine (i(6)A), leading to the formation of 2-methylthio-N6-(dimethylallyl)adenosine (ms(2)i(6)A) at position 37 in tRNAs that read codons beginning with uridine. This is tRNA-2-methylthio-N(6)-dimethylallyladenosine synthase from Parvibaculum lavamentivorans (strain DS-1 / DSM 13023 / NCIMB 13966).